The primary structure comprises 665 residues: Chaperone protein dnaK1 (665 aa).

Residue T198 is modified to Phosphothreonine; by autocatalysis. The disordered stretch occupies residues D634 to L665. Low complexity predominate over residues N642–G651.

It belongs to the heat shock protein 70 family.

Acts as a chaperone. This Prochlorococcus marinus subsp. pastoris (strain CCMP1986 / NIES-2087 / MED4) protein is Chaperone protein dnaK1 (dnaK1).